A 301-amino-acid chain; its full sequence is Probable 5-dehydro-4-deoxyglucarate dehydratase (301 aa).

Belongs to the DapA family.

It catalyses the reaction 5-dehydro-4-deoxy-D-glucarate + H(+) = 2,5-dioxopentanoate + CO2 + H2O. The protein operates within carbohydrate acid metabolism; D-glucarate degradation; 2,5-dioxopentanoate from D-glucarate: step 2/2. This chain is Probable 5-dehydro-4-deoxyglucarate dehydratase, found in Allorhizobium ampelinum (strain ATCC BAA-846 / DSM 112012 / S4) (Agrobacterium vitis (strain S4)).